Here is a 345-residue protein sequence, read N- to C-terminus: D(2) dopamine receptor B (345 aa).

Residues 1–10 lie on the Extracellular side of the membrane; it reads EWRFSRIHCD. Cys-9 and Cys-84 are disulfide-bonded. The chain crosses the membrane as a helical span at residues 11-32; sequence IFVTLDVMMCTASILNLCAISI. The Cytoplasmic segment spans residues 33-53; it reads DRYTAVAMPMLYNTRYSSKRR. Residues 54–74 form a helical membrane-spanning segment; the sequence is VTVMISVVWVLSFAISCPLLF. At 75 to 90 the chain is on the extracellular side; sequence GLNNTASTVCIIDNPA. Asn-77 is a glycosylation site (N-linked (GlcNAc...) asparagine). The chain crosses the membrane as a helical span at residues 91-115; sequence FVIYSSIVSFYVPFIVTLLVYVQIY. At 116 to 275 the chain is on the cytoplasmic side; the sequence is IVLRKRRKRV…SQHKEKKATQ (160 aa). Positions 166–177 are enriched in basic and acidic residues; the sequence is KKKVEAGNHPED. Residues 166-199 form a disordered region; that stretch reads KKKVEAGNHPEDMEMEMMSSTSPPEKTKHKSASP. The chain crosses the membrane as a helical span at residues 276–297; that stretch reads MLAIVLGVFIICWLPFFITHIL. The Extracellular segment spans residues 298 to 311; it reads NMHCNCNIPQALYS. Cys-301 and Cys-303 are oxidised to a cystine. A helical membrane pass occupies residues 312-333; it reads AFTWLGYVNSAVNPIIYTTFNV. The Cytoplasmic segment spans residues 334–345; the sequence is EFRKAFIKILHC. A lipid anchor (S-palmitoyl cysteine) is attached at Cys-345.

This sequence belongs to the G-protein coupled receptor 1 family. Post-translationally, palmitoylated. Palmitoylation is probably required for proper localization to the plasma membrane and stability of the receptor. As to expression, brain; pituitary.

Its subcellular location is the cell membrane. It is found in the golgi apparatus membrane. This is one of the five types (D1 to D5) of receptors for dopamine. The activity of this receptor is mediated by G proteins which inhibits adenylyl cyclase. In Xenopus D2R is involved in the regulation of the melanotrope cells of the intermediate pituitary during background adaptation of the animal. This is D(2) dopamine receptor B (drd2-b) from Xenopus laevis (African clawed frog).